A 96-amino-acid polypeptide reads, in one-letter code: Prokineticin Bm8-e (96 aa).

A signal peptide spans 1-19 (MKCFAQIVVLLLVIAFSHG). Intrachain disulfides connect Cys-26/Cys-38, Cys-32/Cys-50, Cys-37/Cys-78, Cys-60/Cys-86, and Cys-80/Cys-95.

Belongs to the AVIT (prokineticin) family. As to expression, expressed by the skin glands.

Its subcellular location is the secreted. Potent agonist for both PKR1/PROKR1 and PKR2/PROKR2, and inducer of a potent and long-lasting hyperalgesia. Also potentiates capsaicin-induced TRPV1 current, when tested on DRG neurons. At subnanomolar concentrations, this protein both induces potent chemotaxis of macrophages and stimulates LPS-induced production of the pro-inflammatory cytokines IL-1 and IL-12. In vivo, potently stimulates the contraction of the guinea-pig gastrointestinal (GI) smooth muscle (nanomolar concentration). This chain is Prokineticin Bm8-e, found in Bombina maxima (Giant fire-bellied toad).